Reading from the N-terminus, the 140-residue chain is L-fucose mutarotase (140 aa).

The Proton donor role is filled by histidine 22. Substrate contacts are provided by residues aspartate 30, arginine 107, and 129-131 (YGN).

Belongs to the RbsD / FucU family. FucU mutarotase subfamily. As to quaternary structure, homodecamer.

The protein localises to the cytoplasm. It catalyses the reaction alpha-L-fucose = beta-L-fucose. It participates in carbohydrate metabolism; L-fucose metabolism. Involved in the anomeric conversion of L-fucose. This Salmonella arizonae (strain ATCC BAA-731 / CDC346-86 / RSK2980) protein is L-fucose mutarotase.